The sequence spans 141 residues: Hemoglobin subunit alpha (141 aa).

The region spanning 1-141 (VLSSADKANI…VSTVLTSKYR (141 aa)) is the Globin domain. Ser-3 carries the phosphoserine modification. An N6-succinyllysine mark is found at Lys-7 and Lys-11. Position 16 is an N6-acetyllysine; alternate (Lys-16). At Lys-16 the chain carries N6-succinyllysine; alternate. Tyr-24 carries the post-translational modification Phosphotyrosine. Lys-40 carries the N6-succinyllysine modification. Phosphoserine is present on Ser-49. Residue His-58 participates in O2 binding. Residue His-87 coordinates heme b. Ser-102 bears the Phosphoserine mark. Thr-108 carries the phosphothreonine modification. Ser-124 and Ser-131 each carry phosphoserine. 2 positions are modified to phosphothreonine: Thr-134 and Thr-137. Phosphoserine is present on Ser-138.

It belongs to the globin family. In terms of assembly, heterotetramer of two alpha chains and two beta chains. As to expression, red blood cells.

In terms of biological role, involved in oxygen transport from the lung to the various peripheral tissues. Hemopressin acts as an antagonist peptide of the cannabinoid receptor CNR1. Hemopressin-binding efficiently blocks cannabinoid receptor CNR1 and subsequent signaling. This chain is Hemoglobin subunit alpha (HBA), found in Proteles cristata (Aardwolf).